A 224-amino-acid chain; its full sequence is Holliday junction branch migration complex subunit RuvA (224 aa).

Residues 1 to 64 (MIGRLSGVLV…EDLLQLYGFP (64 aa)) form a domain I region. A domain II region spans residues 65–143 (TLLEKEWHRL…EVMAMGGTLE (79 aa)). Residues 144–171 (AALDGVIEDGMAASEGIEPPSAARPAVP) form a flexible linker region. Residues 172-224 (SAASDQAGALSALVNLGYGQGEAASAVATAAGEGAVGETDIIRAALRLLAPKG) are domain III.

It belongs to the RuvA family. Homotetramer. Forms an RuvA(8)-RuvB(12)-Holliday junction (HJ) complex. HJ DNA is sandwiched between 2 RuvA tetramers; dsDNA enters through RuvA and exits via RuvB. An RuvB hexamer assembles on each DNA strand where it exits the tetramer. Each RuvB hexamer is contacted by two RuvA subunits (via domain III) on 2 adjacent RuvB subunits; this complex drives branch migration. In the full resolvosome a probable DNA-RuvA(4)-RuvB(12)-RuvC(2) complex forms which resolves the HJ.

The protein resides in the cytoplasm. In terms of biological role, the RuvA-RuvB-RuvC complex processes Holliday junction (HJ) DNA during genetic recombination and DNA repair, while the RuvA-RuvB complex plays an important role in the rescue of blocked DNA replication forks via replication fork reversal (RFR). RuvA specifically binds to HJ cruciform DNA, conferring on it an open structure. The RuvB hexamer acts as an ATP-dependent pump, pulling dsDNA into and through the RuvAB complex. HJ branch migration allows RuvC to scan DNA until it finds its consensus sequence, where it cleaves and resolves the cruciform DNA. The chain is Holliday junction branch migration complex subunit RuvA from Dinoroseobacter shibae (strain DSM 16493 / NCIMB 14021 / DFL 12).